We begin with the raw amino-acid sequence, 287 residues long: MADPSASLGLWEACWRDLVLGIVQGLTEFLPISSTAHLKVVPVLLDWGDPGVSVTAAIQLGSIVAVIAYFRRDLAQVMQGISKAFRHGQWREPEARLGIAMAVGTLPILAVGLAIKLFWDEGYETSPLRSVPSIAVVSIVMALLLAVAERMGPRRKQLSDVSGRDGLVVGLAQVLALIPGVSRSGSTLTASLLDGWQRADAARFSFLLGIPAITIAGIVELKDALAATADAGPLPLVIGILAATVVSWLAIDWLLKFLQRHSTWLFVAYRLLFGVGLLAWWSIHGAH.

The next 6 membrane-spanning stretches (helical) occupy residues 50–70 (PGVS…IAYF), 99–119 (IAMA…KLFW), 128–148 (LRSV…LAVA), 206–226 (FLLG…DALA), 231–251 (AGPL…WLAI), and 263–283 (TWLF…WWSI).

Belongs to the UppP family.

It localises to the cell inner membrane. The enzyme catalyses di-trans,octa-cis-undecaprenyl diphosphate + H2O = di-trans,octa-cis-undecaprenyl phosphate + phosphate + H(+). Functionally, catalyzes the dephosphorylation of undecaprenyl diphosphate (UPP). Confers resistance to bacitracin. The polypeptide is Undecaprenyl-diphosphatase (Parasynechococcus marenigrum (strain WH8102)).